Consider the following 376-residue polypeptide: N-acetyldiaminopimelate deacetylase (376 aa).

Aspartate 69 is an active-site residue. Glutamate 127 functions as the Proton acceptor in the catalytic mechanism.

Belongs to the peptidase M20A family. N-acetyldiaminopimelate deacetylase subfamily.

The catalysed reaction is N-acetyl-(2S,6S)-2,6-diaminopimelate + H2O = (2S,6S)-2,6-diaminopimelate + acetate. It functions in the pathway amino-acid biosynthesis; L-lysine biosynthesis via DAP pathway; LL-2,6-diaminopimelate from (S)-tetrahydrodipicolinate (acetylase route): step 3/3. Functionally, catalyzes the conversion of N-acetyl-diaminopimelate to diaminopimelate and acetate. In Lactococcus lactis subsp. cremoris (strain SK11), this protein is N-acetyldiaminopimelate deacetylase.